The sequence spans 446 residues: Glucarate dehydratase (446 aa).

4 residues coordinate substrate: His-32, Thr-103, Tyr-150, and Lys-205. Catalysis depends on Lys-207, which acts as the Proton acceptor. Residues Asp-235, Glu-266, and Asn-289 each contribute to the Mg(2+) site. Asp-235–Asn-237 lines the substrate pocket. Substrate-binding positions include Asn-289, His-339–Asn-341, His-368, and Arg-422. His-339 functions as the Proton acceptor in the catalytic mechanism.

The protein belongs to the mandelate racemase/muconate lactonizing enzyme family. GlucD subfamily. Homodimer. The cofactor is Mg(2+).

It catalyses the reaction D-glucarate = 5-dehydro-4-deoxy-D-glucarate + H2O. It participates in carbohydrate acid metabolism; D-glucarate degradation; 2,5-dioxopentanoate from D-glucarate: step 1/2. Catalyzes the dehydration of glucarate to 5-keto-4-deoxy-D-glucarate (5-kdGluc). Also acts on L-idarate. This chain is Glucarate dehydratase (gudD), found in Escherichia coli O157:H7.